A 142-amino-acid chain; its full sequence is Hemoglobin subunit alpha-A (142 aa).

The Globin domain maps to 2–142 (VLSAADKTNV…VGAVLTAKYR (141 aa)). His-59 contacts O2. Position 88 (His-88) interacts with heme b.

The protein belongs to the globin family. As to quaternary structure, heterotetramer of two alpha chains and two beta chains. Red blood cells.

In terms of biological role, involved in oxygen transport from the lung to the various peripheral tissues. The chain is Hemoglobin subunit alpha-A (HBAA) from Mareca penelope (Eurasian wigeon).